The sequence spans 262 residues: Hydroxyethylthiazole kinase (262 aa).

Methionine 50 contacts substrate. ATP is bound by residues arginine 125 and threonine 171. Glycine 198 contacts substrate.

It belongs to the Thz kinase family. Mg(2+) serves as cofactor.

The catalysed reaction is 5-(2-hydroxyethyl)-4-methylthiazole + ATP = 4-methyl-5-(2-phosphooxyethyl)-thiazole + ADP + H(+). It functions in the pathway cofactor biosynthesis; thiamine diphosphate biosynthesis; 4-methyl-5-(2-phosphoethyl)-thiazole from 5-(2-hydroxyethyl)-4-methylthiazole: step 1/1. Functionally, catalyzes the phosphorylation of the hydroxyl group of 4-methyl-5-beta-hydroxyethylthiazole (THZ). In Escherichia coli O81 (strain ED1a), this protein is Hydroxyethylthiazole kinase.